A 374-amino-acid chain; its full sequence is Lipid-A-disaccharide synthase (374 aa).

This sequence belongs to the LpxB family.

It carries out the reaction a lipid X + a UDP-2-N,3-O-bis[(3R)-3-hydroxyacyl]-alpha-D-glucosamine = a lipid A disaccharide + UDP + H(+). The protein operates within bacterial outer membrane biogenesis; LPS lipid A biosynthesis. Condensation of UDP-2,3-diacylglucosamine and 2,3-diacylglucosamine-1-phosphate to form lipid A disaccharide, a precursor of lipid A, a phosphorylated glycolipid that anchors the lipopolysaccharide to the outer membrane of the cell. The sequence is that of Lipid-A-disaccharide synthase from Pseudomonas fluorescens (strain ATCC BAA-477 / NRRL B-23932 / Pf-5).